We begin with the raw amino-acid sequence, 250 residues long: Cholesterol ring-cleaving hydrolase IpdB subunit (250 aa).

This sequence belongs to the 3-oxoacid CoA-transferase subunit B family. In terms of assembly, heterotetramer composed of 2 IpdA subunits and 2 IpdB subunits.

The enzyme catalyses (3E)-2-(2-carboxylatoethyl)-3-methyl-6-oxocyclohex-1-ene-1-carboxyl-CoA + H2O = 6-methyl-3,7-dioxodecanedioyl-CoA. It participates in steroid metabolism; cholesterol degradation. Its function is as follows. Involved in the final steps of cholesterol and steroid degradation. Opens the last steroid ring of cholesterol by catalyzing the hydrolysis of (3E)-2-(2-carboxylatoethyl)-3-methyl-6-oxocyclohex-1-ene-1-carboxyl-CoA (COCHEA-CoA) to 6-methyl-3,7-dioxodecanedioyl-CoA (MeDODA-CoA). This is Cholesterol ring-cleaving hydrolase IpdB subunit from Mycobacterium bovis (strain ATCC BAA-935 / AF2122/97).